Consider the following 237-residue polypeptide: Indole-3-glycerol phosphate synthase (237 aa).

It belongs to the TrpC family.

The enzyme catalyses 1-(2-carboxyphenylamino)-1-deoxy-D-ribulose 5-phosphate + H(+) = (1S,2R)-1-C-(indol-3-yl)glycerol 3-phosphate + CO2 + H2O. It functions in the pathway amino-acid biosynthesis; L-tryptophan biosynthesis; L-tryptophan from chorismate: step 4/5. The chain is Indole-3-glycerol phosphate synthase from Thermoplasma volcanium (strain ATCC 51530 / DSM 4299 / JCM 9571 / NBRC 15438 / GSS1).